A 282-amino-acid chain; its full sequence is AB hydrolase superfamily protein FGSG_00045 (282 aa).

Residues 1-10 show a composition bias toward polar residues; the sequence is MAPISSTRPS. The interval 1-22 is disordered; sequence MAPISSTRPSHSIAADNPNPTT. The AB hydrolase-1 domain maps to 22–270; sequence TQVNFNTNMT…FADMVKRWII (249 aa).

It belongs to the AB hydrolase superfamily.

It functions in the pathway mycotoxin biosynthesis. Functionally, AB hydrolase superfamily protein; part of the gene cluster that mediates the biosynthesis of gramillins A and B, bicyclic lipopeptides that induce cell death in maize leaves but not in wheat leaves. The nonribosomal peptide synthetase GRA1 incorporates respectively a glutamic adic (Glu), a leucine (Leu), a serine (Ser), a hydroxyglutamine (HOGln), a 2-amino decanoic acid, and 2 cysteins (CysB and CysA). The biosynthesis of 2-amino decanoic acid incorporated in gramillins could be initiated by a fatty acid synthase composed of the alpha and beta subunits FGSG_00036 and FGSG_11656. The cytochrome P450 monooxygenase FGSG_15680 could hydroxylate the fatty acid chain. Subsequent oxidation to the ketone by the oxidoreductase FGSG_00048 and transamination by aminotransferase FGSG_00049 could form 2-amino-decanoic acid. On the other hand, FGSG_15680 could also be responsible for the HO-modified glutamine at the gamma-position. Whether hydroxylation occurs on the fully assembled product or on the Gln residue prior to assembly into the gramillins requires further proof. The thioredoxin FGSG_00043 could also be required for the disulfide-bond formation between CysA and CysB. The specific involvement of the remaining proteins from the cluster is more difficult to discern, but could have broader regulatory (FGSG_00040 and FGSG_11657) or enzymatic functions (FGSG_00044 and FGSG_00045). The final C-domain of GRA1 does not possess the expected sequence of a termination CT domain, often implicated in macrocyclization and release of a cyclopeptidein fungal NRPs; and the thioesterase FGSG_00047 may act in concert with the terminal C-domain of GRA1 to catalyze the formation of the macrocyclic anhydride and release of the products. The polypeptide is AB hydrolase superfamily protein FGSG_00045 (Gibberella zeae (strain ATCC MYA-4620 / CBS 123657 / FGSC 9075 / NRRL 31084 / PH-1) (Wheat head blight fungus)).